Consider the following 151-residue polypeptide: Probable cGMP 3',5'-cyclic phosphodiesterase subunit delta (151 aa).

Belongs to the PDE6D/unc-119 family. Interacts with Pde6.

Its subcellular location is the nucleus. The protein resides in the cytoplasm. The polypeptide is Probable cGMP 3',5'-cyclic phosphodiesterase subunit delta (Drosophila simulans (Fruit fly)).